The primary structure comprises 266 residues: 5'-nucleotidase SurE (266 aa).

Residues Asp-8, Asp-9, Ser-39, and Asn-93 each coordinate a divalent metal cation.

This sequence belongs to the SurE nucleotidase family. A divalent metal cation is required as a cofactor.

It localises to the cytoplasm. It catalyses the reaction a ribonucleoside 5'-phosphate + H2O = a ribonucleoside + phosphate. In terms of biological role, nucleotidase that shows phosphatase activity on nucleoside 5'-monophosphates. The polypeptide is 5'-nucleotidase SurE (Thermococcus gammatolerans (strain DSM 15229 / JCM 11827 / EJ3)).